Here is a 173-residue protein sequence, read N- to C-terminus: Development-specific protein S (173 aa).

Beta/gamma crystallin 'Greek key' domains lie at 2–46 (ANIT…KVPP) and 48–86 (VKAILYQNDGFAGDQIEVVANAEELGPLNNNVSSIRVIS). Ca(2+)-binding residues include Y8, N37, T38, S40, Q54, N77, N78, and S80. Residues 87-90 (VPVQ) are connecting peptide. Beta/gamma crystallin 'Greek key' domains are found at residues 91 to 135 (PRAR…KPQG) and 136 to 173 (LAVVLFKNDNFSGDTLPVNSDAPTLGAMNNNTSSIRIS).

This sequence belongs to the beta/gamma-crystallin family.

In terms of biological role, protein S, induced in large amounts during fruiting body formation, assembles on the surface of myxospores in the presence of calcium ions. This chain is Development-specific protein S (tps), found in Myxococcus xanthus.